We begin with the raw amino-acid sequence, 467 residues long: MAPQLLLCLILTFLWSLPEAESNVFLKSKVANRFLQRTKRANSLVEEFKSGNIERECIEERCSKEEAREVFEDDEKTETFWNVYVDGDQCSSNPCHYRGICKDGIGSYTCTCLSGYEGKNCERVLYKSCRVDNGNCWHFCKSVQNDIQCSCAEGYLLGEDGHSCVAGGNFSCGRNIKTRNKREASLPDFVQSHNATLLKKSDNPSPDIRIVNGMDCKLGECPWQAALVDDKKGVFCGGTILSPIYVLTAAHCINETETISVVVGEIDRSRAETGPLLSVDKVYVHKKFVPPKKSQEFYEKFDLVSYDYDIAIIQMKTPIQFSENVVPACLPTADFANQVLMKQDFGIVSGFGGIFERGPNSKTLKVLKVPYVDRHTCMLSSNFPITPTMFCAGYDTLPQDACQGDSGGPHITAYRDTHFITGIVSWGEGCARKGRYGIYTKLSKFIPWIKRIMRQKLPSTESSTGRL.

The N-terminal stretch at 1 to 22 is a signal peptide; that stretch reads MAPQLLLCLILTFLWSLPEAES. Positions 23–40 are excised as a propeptide; that stretch reads NVFLKSKVANRFLQRTKR. Residues 41 to 86 enclose the Gla domain; the sequence is ANSLVEEFKSGNIERECIEERCSKEEAREVFEDDEKTETFWNVYVD. A 4-carboxyglutamate mark is found at Glu-46, Glu-47, Glu-54, Glu-56, Glu-59, Glu-60, Glu-65, Glu-66, Glu-69, and Glu-72. Cys-57 and Cys-62 are oxidised to a cystine. Residues 86–122 form the EGF-like 1; calcium-binding domain; that stretch reads DGDQCSSNPCHYRGICKDGIGSYTCTCLSGYEGKNCE. Cystine bridges form between Cys-90–Cys-101, Cys-95–Cys-110, Cys-112–Cys-121, Cys-129–Cys-140, Cys-136–Cys-149, Cys-151–Cys-164, Cys-172–Cys-329, Cys-216–Cys-221, Cys-236–Cys-252, Cys-377–Cys-391, and Cys-402–Cys-430. The O-linked (Hex...) serine glycan is linked to Ser-92. An EGF-like 2 domain is found at 129–164; that stretch reads CRVDNGNCWHFCKSVQNDIQCSCAEGYLLGEDGHSC. Positions 182-209 are cleaved as a propeptide — activation peptide; that stretch reads REASLPDFVQSHNATLLKKSDNPSPDIR. Residues 210-454 enclose the Peptidase S1 domain; sequence IVNGMDCKLG…FIPWIKRIMR (245 aa). Residue His-251 is the Charge relay system of the active site. N-linked (GlcNAc...) asparagine glycosylation occurs at Asn-254. Asp-309 serves as the catalytic Charge relay system. Ser-406 functions as the Charge relay system in the catalytic mechanism.

It belongs to the peptidase S1 family. Snake venom subfamily. As to quaternary structure, heterodimer of a light and a heavy chains; disulfide-linked. Is associated with pseutarin-C non-catalytic subunit (AC Q7SZN0) in a non-covalent manner. Gamma-carboxyglutamate residues are formed by vitamin K dependent carboxylation. These residues are essential for the binding of calcium. Expressed by the venom gland.

Its subcellular location is the secreted. It catalyses the reaction Selective cleavage of Arg-|-Thr and then Arg-|-Ile bonds in prothrombin to form thrombin.. Its activity is regulated as follows. Activated by calcium and negatively charged phospholipids. Snake prothrombin activator that attacks the hemostatic system of prey. This non-catalytic subunit is functionally similar to blood coagulation factor V. It serves as a critical cofactor for the prothrombinase activity of the catalytic subunit, which is similar to the blood coagulation factor X. The complex converts prothrombin to thrombin by sequential cleavage at two positions, Arg-320 followed by Arg-271. Cleavage at Arg-320 produces an active intermediate known as meizothrombin. Meizothrombin is the 'second' substrate for prothrombinase, and it docks in an altered manner to present the second cleavage site (271). Cleavage at Arg-271 releases active thrombin from its pro-fragment. This order of events is reversed if the protease component of prothrombinase is used on its own, suggesting that the 271 site is inherently more accessible to proteolysis. The complex converts prothrombin to thrombin in presence but also in the absence of membrane. The protein is Venom prothrombin activator pseutarin-C catalytic subunit of Pseudonaja textilis (Eastern brown snake).